Reading from the N-terminus, the 594-residue chain is Chitooligosaccharidolytic beta-N-acetylglucosaminidase (594 aa).

The N-terminal stretch at 1–22 (MWSRRIPLFIFGVLVLILSVAA) is a signal peptide. 2 cysteine pairs are disulfide-bonded: Cys31–Cys59 and Cys36–Cys55. Asn164 carries N-linked (GlcNAc...) asparagine glycosylation. Residues Asp249 and His303 each act as charge relay system in the active site. 2 disulfide bridges follow: Cys316-Cys373 and Cys326-Cys331. Glu368 acts as the Charge relay system in catalysis. Asn375 carries an N-linked (GlcNAc...) asparagine glycan. 2 disulfide bridges follow: Cys478-Cys491 and Cys585-Cys592.

It belongs to the glycosyl hydrolase 20 family. Homodimer.

It catalyses the reaction Hydrolysis of terminal non-reducing N-acetyl-D-hexosamine residues in N-acetyl-beta-D-hexosaminides.. With respect to regulation, inhibited by O-(2-acetamido-2-deoxy-D-glucopyransylidene)-amino-N-phenylcarbamate (PUGNAc). Inhibited by thiabendazole (TMG)-chitotriomycin. Inhibited by 6-(dimethylamino)-2-(2-(((5-methyl-1,3,4-thiadiazol-2-yl)methyl)amino)ethyl)- 1H-benzo[de]isoquinoline-1,3(2H)-dione (Q2), a synthesized non-carbohydrate unsymmetrical dyad of naphthalimide and thiadiazole having a dimethylamino group at C4 of the naphthalimide. Inhibited poorly by N-acetyl-glucosamine (NAG)-thiazoline (NGT), but when the thiazoline ring of NGT is replaced by a bulky substituent such as in compound 1,2-dideoxy-2'-methylamino-alpha-D-glucopyranoso-[2,1-d]-Delta2'-thiazoline (NMAGT), the inhibition constant Ki is lowered 600-fold compared to that of NGT. Inhibited by berberine, berberine analogs thalifendine and palmatine, and berberine derivative SYSU-1, but not by berberine analog tetrahydroberberine. Its function is as follows. Hydrolyzes one beta-GlcNAc unit at a time from the non-reducing ends of substrates, with a preference for shorter substrates. The 2-acetamido group and the beta-glycoside bond linkage in the substrate are required for its activity. Active with p-nitrophenyl (pNP)-beta-GlcNAc, pNP-beta-GalNAc and chitooligosaccharides (degree of polymerization from 2 to 6), but not with the complex N-glycan substrate (GlcNAcbeta-1,2Manalpha-1,6)(GlcNAcbeta-1,2Manalpha-1,3)Manbeta-1,4GlcNAcbeta-1,4GlcNAc-PA (GnGn-PA), pNP-alpha-GlcNAc or with the long polymer colloidal chitin. Involved in chitin catabolism. Involved in the degradation of old cuticle during the pupation stage. The polypeptide is Chitooligosaccharidolytic beta-N-acetylglucosaminidase (Ostrinia furnacalis (Asian corn borer)).